The primary structure comprises 297 residues: Transmembrane protein 178A (297 aa).

The first 25 residues, 1-25, serve as a signal peptide directing secretion; sequence MEPRALVTALSLGLSLCSLGLLVTA. Residues 26 to 179 lie on the Extracellular side of the membrane; sequence IFTDHWYETD…LLHLRRITAG (154 aa). Basic and acidic residues predominate over residues 41–57; that stretch reads ESCERSRAGADPPDQKN. Residues 41–86 form a disordered region; the sequence is ESCERSRAGADPPDQKNRLMPLSHLPLRDSPPLGRRLLPGGPGRSD. The span at 68 to 79 shows a compositional bias: low complexity; that stretch reads RDSPPLGRRLLP. N-linked (GlcNAc...) asparagine glycosylation occurs at N158. The chain crosses the membrane as a helical span at residues 180-200; that stretch reads FLGMAVAVLLCGCIVATVSFF. The Cytoplasmic segment spans residues 201–208; it reads WEESLTQH. Residues 209–229 form a helical membrane-spanning segment; the sequence is VAGLLFLMTGIFCTISLCTYA. The Extracellular segment spans residues 230 to 257; it reads ASVSYDLNRVPKLIYSLPHDVEHGYSWS. Residues 258 to 278 traverse the membrane as a helical segment; sequence IFCAWCSLGFIVAAGGLCIAY. Residues 279 to 297 lie on the Cytoplasmic side of the membrane; sequence PFISRTKIAHLKSGRDSTV.

This sequence belongs to the TMEM178 family. In terms of assembly, interacts with STIM1. In terms of tissue distribution, highly expressed in the bone and its expression increases during osteoclastogenesis.

The protein resides in the endoplasmic reticulum membrane. Acts as a negative regulator of osteoclast differentiation in basal and inflammatory conditions by regulating TNFSF11-induced Ca (2+) fluxes, thereby controlling the induction of NFATC1. The chain is Transmembrane protein 178A (Tmem178a) from Mus musculus (Mouse).